The chain runs to 83 residues: Cytochrome b559 subunit alpha (83 aa).

The chain crosses the membrane as a helical span at residues 21–35 (VIHSITIPSLFIAGW). His-23 provides a ligand contact to heme.

This sequence belongs to the PsbE/PsbF family. As to quaternary structure, heterodimer of an alpha subunit and a beta subunit. PSII is composed of 1 copy each of membrane proteins PsbA, PsbB, PsbC, PsbD, PsbE, PsbF, PsbH, PsbI, PsbJ, PsbK, PsbL, PsbM, PsbT, PsbX, PsbY, PsbZ, Psb30/Ycf12, at least 3 peripheral proteins of the oxygen-evolving complex and a large number of cofactors. It forms dimeric complexes. It depends on heme b as a cofactor.

It localises to the plastid. Its subcellular location is the chloroplast thylakoid membrane. Functionally, this b-type cytochrome is tightly associated with the reaction center of photosystem II (PSII). PSII is a light-driven water:plastoquinone oxidoreductase that uses light energy to abstract electrons from H(2)O, generating O(2) and a proton gradient subsequently used for ATP formation. It consists of a core antenna complex that captures photons, and an electron transfer chain that converts photonic excitation into a charge separation. The chain is Cytochrome b559 subunit alpha from Piper cenocladum (Ant piper).